Consider the following 267-residue polypeptide: Tryptophan synthase alpha chain (267 aa).

Residues glutamate 49 and aspartate 60 each act as proton acceptor in the active site.

Belongs to the TrpA family. Tetramer of two alpha and two beta chains.

It carries out the reaction (1S,2R)-1-C-(indol-3-yl)glycerol 3-phosphate + L-serine = D-glyceraldehyde 3-phosphate + L-tryptophan + H2O. It participates in amino-acid biosynthesis; L-tryptophan biosynthesis; L-tryptophan from chorismate: step 5/5. Functionally, the alpha subunit is responsible for the aldol cleavage of indoleglycerol phosphate to indole and glyceraldehyde 3-phosphate. In Acinetobacter baylyi (strain ATCC 33305 / BD413 / ADP1), this protein is Tryptophan synthase alpha chain.